The primary structure comprises 713 residues: Early transcription factor 82 kDa subunit (713 aa).

This sequence belongs to the poxviridae VETF large subunit family. As to quaternary structure, heterodimer of a 70 kDa and a 82 kDa subunit. Part of the early transcription complex composed of ETF, RAP94, and the DNA-directed RNA polymerase.

Acts with RNA polymerase to initiate transcription from early gene promoters. Is recruited by the RPO-associated protein of 94 kDa (RAP94) to form the early transcription complex, which also contains the core RNA polymerase. ETF heterodimer binds to early gene promoters. The sequence is that of Early transcription factor 82 kDa subunit (VETFL) from Yaba monkey tumor virus (strain VR587) (YMTV).